The chain runs to 129 residues: Glycine cleavage system H protein (129 aa).

The region spanning Thr24–Lys106 is the Lipoyl-binding domain. An N6-lipoyllysine modification is found at Lys65.

It belongs to the GcvH family. In terms of assembly, the glycine cleavage system is composed of four proteins: P, T, L and H. (R)-lipoate serves as cofactor.

Functionally, the glycine cleavage system catalyzes the degradation of glycine. The H protein shuttles the methylamine group of glycine from the P protein to the T protein. In Citrobacter koseri (strain ATCC BAA-895 / CDC 4225-83 / SGSC4696), this protein is Glycine cleavage system H protein.